The sequence spans 923 residues: Probable dipeptidyl-aminopeptidase B (923 aa).

Residues 1-16 (MATEKGHGRDDEERVP) show a composition bias toward basic and acidic residues. The segment at 1-21 (MATEKGHGRDDEERVPLTRGS) is disordered. Residues 1-99 (MATEKGHGRD…KPMHKSVKIA (99 aa)) lie on the Cytoplasmic side of the membrane. Residues 100–120 (LWTLLFLSLGGWSLAFVLFIF) traverse the membrane as a helical; Signal-anchor for type II membrane protein segment. Residues 121–923 (RSHDTYETPI…GLSYNFKHLH (803 aa)) are Vacuolar-facing. 3 N-linked (GlcNAc...) asparagine glycosylation sites follow: asparagine 135, asparagine 351, and asparagine 574. Serine 756 functions as the Charge relay system in the catalytic mechanism. A glycan (N-linked (GlcNAc...) asparagine) is linked at asparagine 815. Residues aspartate 833 and histidine 866 each act as charge relay system in the active site. N-linked (GlcNAc...) asparagine glycosylation is present at asparagine 902.

The protein belongs to the peptidase S9B family.

The protein resides in the vacuole membrane. The enzyme catalyses Release of an N-terminal dipeptide, Xaa-Yaa-|-Zaa-, from a polypeptide, preferentially when Yaa is Pro, provided Zaa is neither Pro nor hydroxyproline.. Type IV dipeptidyl-peptidase which removes N-terminal dipeptides sequentially from polypeptides having unsubstituted N-termini provided that the penultimate residue is proline. The protein is Probable dipeptidyl-aminopeptidase B (DAPB) of Ajellomyces capsulatus (strain G186AR / H82 / ATCC MYA-2454 / RMSCC 2432) (Darling's disease fungus).